The following is a 189-amino-acid chain: Proline-rich protein 29 (189 aa).

The segment at 152–189 (SREREVRAVPPPPPPSATGTVGADVPPASDYYDAESLL) is disordered.

The protein is Proline-rich protein 29 (PRR29) of Homo sapiens (Human).